Consider the following 974-residue polypeptide: Hexokinase-1 (974 aa).

The segment at 1–42 (MGWGAPLLSRMLHGPGQAGETSPVPERQSGSENPASEDRRPL) is disordered. The segment at 57–66 (CQRGQAVDVE) is mitochondrial-binding peptide (MBP). Hexokinase domains are found at residues 72 to 514 (PLTE…MVTA) and 520 to 962 (AEQH…LITA). Residues R86 and 140–145 (DLGGSS) contribute to the ATP site. The hexokinase small subdomain 1 stretch occupies residues 129–263 (DGSEKGDFIA…DYDANIVAVV (135 aa)). Position 140-147 (140-147 (DLGGSSFR)) interacts with D-glucose 6-phosphate. D-glucose-binding positions include S211, 228-229 (TK), and 264-265 (ND). Residues 264–503 (NDTVGTMMTC…SDVRFLLSES (240 aa)) form a hexokinase large subdomain 1 region. D-glucose 6-phosphate is bound by residues D265 and T288. Residues N291, E316, and 347 to 350 (QLFE) contribute to the D-glucose site. S393 is modified (phosphoserine). Position 469–471 (469–471 (DGS)) interacts with D-glucose 6-phosphate. 481–482 (RR) contacts ATP. D-glucose 6-phosphate contacts are provided by residues S505 and 588 to 592 (DLGGT). The tract at residues 577 to 711 (DGTEHGDFLA…EFDLDVVAVV (135 aa)) is hexokinase small subdomain 2. 588–593 (DLGGTN) contacts ATP. Residues 659-660 (SF), 676-677 (TK), and 712-713 (ND) contribute to the D-glucose site. The interval 712-951 (NDTVGTMMTC…CTVSFLLSED (240 aa)) is hexokinase large subdomain 2. Positions 713 and 736 each coordinate D-glucose 6-phosphate. T736 is an ATP binding site. D-glucose-binding positions include 738–739 (SN), E764, and E798. ATP-binding positions include 803 to 804 (GM), 840 to 844 (TKFLS), and 919 to 923 (TLYKL). D-glucose 6-phosphate contacts are provided by residues 917–919 (DGT) and S953.

This sequence belongs to the hexokinase family. As to quaternary structure, monomer. Interacts with RABL2/RABL2A; binds preferentially to GTP-bound RABL2. Interacts with VDAC1. The HK1-VDAC1 complex interacts with ATF2. Interacts (via N-terminal spermatogenic cell-specific region) with PFKM isoform 2 and isoform 3 (via C-terminus). Interacts with SMAD5. In terms of processing, tyrosine-phosphorylated. As to expression, in rapidly growing tumor cells exhibiting high glucose catabolic rates, isoform HK1 is markedly elevated. Isoform HK1-SA, isoform HK1-SB and isoform HK1-SC are found only in spermatogenic cells. Isoform HK1-SC is detected in round spermatids, condensing spermatids and mature sperm where it is found in the head membranes, mitochondria of the midpiece and the fibrous sheath of the flagellum. Expressed within the principal piece and midpiece of sperm tail (at protein level).

Its subcellular location is the mitochondrion outer membrane. The protein resides in the cytoplasm. It is found in the cytosol. It localises to the membrane. It catalyses the reaction a D-hexose + ATP = a D-hexose 6-phosphate + ADP + H(+). It carries out the reaction D-fructose + ATP = D-fructose 6-phosphate + ADP + H(+). The catalysed reaction is D-glucose + ATP = D-glucose 6-phosphate + ADP + H(+). The enzyme catalyses D-mannose + ATP = D-mannose 6-phosphate + ADP + H(+). It catalyses the reaction D-glucosamine + ATP = D-glucosamine 6-phosphate + ADP + H(+). It functions in the pathway carbohydrate metabolism; hexose metabolism. Its pathway is carbohydrate degradation; glycolysis; D-glyceraldehyde 3-phosphate and glycerone phosphate from D-glucose: step 1/4. Its activity is regulated as follows. Hexokinase is an allosteric enzyme inhibited by its product D-glucose 6-phosphate. Hexokinase activity is inhibited by N-acetyl-D-glucosamine. Functionally, catalyzes the phosphorylation of various hexoses, such as D-glucose, D-glucosamine, D-fructose, D-mannose and 2-deoxy-D-glucose, to hexose 6-phosphate (D-glucose 6-phosphate, D-glucosamine 6-phosphate, D-fructose 6-phosphate, D-mannose 6-phosphate and 2-deoxy-D-glucose 6-phosphate, respectively). Does not phosphorylate N-acetyl-D-glucosamine. Mediates the initial step of glycolysis by catalyzing phosphorylation of D-glucose to D-glucose 6-phosphate. Involved in innate immunity and inflammation by acting as a pattern recognition receptor for bacterial peptidoglycan. When released in the cytosol, N-acetyl-D-glucosamine component of bacterial peptidoglycan inhibits the hexokinase activity of HK1 and causes its dissociation from mitochondrial outer membrane, thereby activating the NLRP3 inflammasome. The protein is Hexokinase-1 of Mus musculus (Mouse).